The following is a 279-amino-acid chain: Ribosomal RNA small subunit methyltransferase A (279 aa).

S-adenosyl-L-methionine-binding residues include histidine 15, leucine 17, glycine 42, glutamate 64, aspartate 89, and asparagine 109.

Belongs to the class I-like SAM-binding methyltransferase superfamily. rRNA adenine N(6)-methyltransferase family. RsmA subfamily.

The protein localises to the cytoplasm. It catalyses the reaction adenosine(1518)/adenosine(1519) in 16S rRNA + 4 S-adenosyl-L-methionine = N(6)-dimethyladenosine(1518)/N(6)-dimethyladenosine(1519) in 16S rRNA + 4 S-adenosyl-L-homocysteine + 4 H(+). Specifically dimethylates two adjacent adenosines (A1518 and A1519) in the loop of a conserved hairpin near the 3'-end of 16S rRNA in the 30S particle. May play a critical role in biogenesis of 30S subunits. The sequence is that of Ribosomal RNA small subunit methyltransferase A from Prochlorococcus marinus (strain SARG / CCMP1375 / SS120).